The sequence spans 261 residues: 5'-nucleotidase SurE (261 aa).

Aspartate 8, aspartate 9, serine 40, and asparagine 94 together coordinate a divalent metal cation.

It belongs to the SurE nucleotidase family. A divalent metal cation is required as a cofactor.

The protein resides in the cytoplasm. The enzyme catalyses a ribonucleoside 5'-phosphate + H2O = a ribonucleoside + phosphate. Its function is as follows. Nucleotidase that shows phosphatase activity on nucleoside 5'-monophosphates. In Anaplasma marginale (strain St. Maries), this protein is 5'-nucleotidase SurE.